Reading from the N-terminus, the 95-residue chain is Small ribosomal subunit protein uS19 (95 aa).

The segment at 75–95 (APTRSFRGHGGKKADKRGKMK) is disordered. Residues 80-95 (FRGHGGKKADKRGKMK) are compositionally biased toward basic residues.

This sequence belongs to the universal ribosomal protein uS19 family.

Functionally, protein S19 forms a complex with S13 that binds strongly to the 16S ribosomal RNA. The sequence is that of Small ribosomal subunit protein uS19 from Roseiflexus sp. (strain RS-1).